Reading from the N-terminus, the 154-residue chain is Ribosome maturation factor RimP (154 aa).

This sequence belongs to the RimP family.

It localises to the cytoplasm. Its function is as follows. Required for maturation of 30S ribosomal subunits. This chain is Ribosome maturation factor RimP, found in Clostridium kluyveri (strain ATCC 8527 / DSM 555 / NBRC 12016 / NCIMB 10680 / K1).